The sequence spans 194 residues: Xanthine phosphoribosyltransferase (194 aa).

2 residues coordinate xanthine: leucine 20 and asparagine 27. Residue 128-132 (ANGEA) coordinates 5-phospho-alpha-D-ribose 1-diphosphate. Lysine 156 lines the xanthine pocket.

Belongs to the purine/pyrimidine phosphoribosyltransferase family. Xpt subfamily. As to quaternary structure, homodimer.

It localises to the cytoplasm. The catalysed reaction is XMP + diphosphate = xanthine + 5-phospho-alpha-D-ribose 1-diphosphate. The protein operates within purine metabolism; XMP biosynthesis via salvage pathway; XMP from xanthine: step 1/1. Functionally, converts the preformed base xanthine, a product of nucleic acid breakdown, to xanthosine 5'-monophosphate (XMP), so it can be reused for RNA or DNA synthesis. This is Xanthine phosphoribosyltransferase from Macrococcus caseolyticus (strain JCSC5402) (Macrococcoides caseolyticum).